Here is a 469-residue protein sequence, read N- to C-terminus: Adenosylhomocysteinase (469 aa).

Substrate is bound by residues T58, D133, and E195. Position 196 to 198 (196 to 198 (TTT)) interacts with NAD(+). Residues K225 and D229 each coordinate substrate. Residues N230, 259–264 (GFGDVG), E282, N317, 338–340 (IGH), and N383 contribute to the NAD(+) site.

The protein belongs to the adenosylhomocysteinase family. Requires NAD(+) as cofactor.

The protein localises to the cytoplasm. The catalysed reaction is S-adenosyl-L-homocysteine + H2O = L-homocysteine + adenosine. It functions in the pathway amino-acid biosynthesis; L-homocysteine biosynthesis; L-homocysteine from S-adenosyl-L-homocysteine: step 1/1. In terms of biological role, may play a key role in the regulation of the intracellular concentration of adenosylhomocysteine. This is Adenosylhomocysteinase from Rhodopseudomonas palustris (strain ATCC BAA-98 / CGA009).